Consider the following 113-residue polypeptide: Putative anti-sigma factor antagonist TM1081 homolog (113 aa).

In terms of domain architecture, STAS spans methionine 1–valine 110. Position 55 is a phosphoserine (serine 55).

It belongs to the anti-sigma-factor antagonist family. Post-translationally, phosphorylated on a serine residue.

In terms of biological role, in the phosphorylated form it could act as an anti-anti-sigma factor that counteracts an anti-sigma factor and thus releases a sigma factor from inhibition. This Thermotoga neapolitana protein is Putative anti-sigma factor antagonist TM1081 homolog.